The following is a 1186-amino-acid chain: Myelin transcription factor 1-like protein (1186 aa).

The segment at 1 to 21 is disordered; that stretch reads MEVDTEEKRHRTRSKGVRVPV. Residues 22-65 form a CCHHC-type 1 zinc finger; the sequence is EPAIQELFSCPTPGCDGSGHVSGKYARHRSVYGCPLAKKRKTQD. The Zn(2+) site is built by C31, C36, H49, and C55. Disordered stretches follow at residues 56–175 and 220–247; these read PLAK…QMNC and RTES…GRKS. Acidic residues predominate over residues 86-169; that stretch reads SVDECDDSDG…EEEEEEEENE (84 aa). S250 is subject to Phosphoserine. Disordered regions lie at residues 342 to 372 and 449 to 513; these read SETN…GRTP and REKM…GCDG. Polar residues predominate over residues 343 to 357; it reads ETNPQERNPQQNMNI. Composition is skewed to basic and acidic residues over residues 361–372, 449–487, and 495–505; these read VRPEEDFPGRTP, REKM…DSHV, and DPSRTEKKESK. CCHHC-type zinc fingers lie at residues 497–540 and 541–584; these read SRTE…PPEI and LAMH…KLAK. The Zn(2+) site is built by C506, C511, H524, C530, C550, C555, H568, and C574. Disordered regions lie at residues 659–709 and 753–780; these read RAIA…GGGS and KPQD…MNKQ. Positions 666–683 are enriched in basic and acidic residues; the sequence is QTRDISPKGYDDAKRYCK. The segment covering 685–709 has biased composition (low complexity); it reads PSPSSSSTSSYAPSSSSNLSCGGGS. CCHHC-type zinc fingers lie at residues 896–939, 945–988, and 998–1041; these read LATS…GIRI, DKED…QKDG, and KSVK…MKKA. C905, C910, H923, C929, C954, C959, H972, C978, C1007, C1012, H1025, and C1031 together coordinate Zn(2+). The stretch at 1056 to 1130 forms a coiled coil; sequence SNGIENDEEI…LANLSQSLIH (75 aa).

Belongs to the MYT1 family. Interacts with SIN3B.

It localises to the nucleus. It is found in the chromosome. Its function is as follows. Transcription factor that plays a key role in neuronal differentiation by specifically repressing expression of non-neuronal genes during neuron differentiation. In contrast to other transcription repressors that inhibit specific lineages, mediates repression of multiple differentiation programs. Also represses expression of negative regulators of neurogenesis, such as members of the Notch signaling pathway, including HES1. The combination of three transcription factors, ASCL1, POU3F2/BRN2 and MYT1L, is sufficient to reprogram fibroblasts and other somatic cells into induced neuronal (iN) cells in vitro. Directly binds the 5'-AAGTT-3' core motif present on the promoter of target genes and represses transcription by recruiting a multiprotein complex containing SIN3B. The 5'-AAGTT-3' core motif is absent from the promoter of neural genes. This Homo sapiens (Human) protein is Myelin transcription factor 1-like protein.